The sequence spans 367 residues: UDP-N-acetylglucosamine--N-acetylmuramyl-(pentapeptide) pyrophosphoryl-undecaprenol N-acetylglucosamine transferase (367 aa).

UDP-N-acetyl-alpha-D-glucosamine is bound by residues 13 to 15, Asn127, Arg168, Ser200, Ile251, and Gln296; that span reads TGG.

Belongs to the glycosyltransferase 28 family. MurG subfamily.

The protein resides in the cell inner membrane. It carries out the reaction di-trans,octa-cis-undecaprenyl diphospho-N-acetyl-alpha-D-muramoyl-L-alanyl-D-glutamyl-meso-2,6-diaminopimeloyl-D-alanyl-D-alanine + UDP-N-acetyl-alpha-D-glucosamine = di-trans,octa-cis-undecaprenyl diphospho-[N-acetyl-alpha-D-glucosaminyl-(1-&gt;4)]-N-acetyl-alpha-D-muramoyl-L-alanyl-D-glutamyl-meso-2,6-diaminopimeloyl-D-alanyl-D-alanine + UDP + H(+). It participates in cell wall biogenesis; peptidoglycan biosynthesis. Cell wall formation. Catalyzes the transfer of a GlcNAc subunit on undecaprenyl-pyrophosphoryl-MurNAc-pentapeptide (lipid intermediate I) to form undecaprenyl-pyrophosphoryl-MurNAc-(pentapeptide)GlcNAc (lipid intermediate II). This chain is UDP-N-acetylglucosamine--N-acetylmuramyl-(pentapeptide) pyrophosphoryl-undecaprenol N-acetylglucosamine transferase, found in Flavobacterium psychrophilum (strain ATCC 49511 / DSM 21280 / CIP 103535 / JIP02/86).